A 30-amino-acid chain; its full sequence is Brevinin-2Rg (30 aa).

Cys-24 and Cys-30 are joined by a disulfide.

Expressed by the skin glands.

It is found in the secreted. Antimicrobial peptide. The chain is Brevinin-2Rg from Pelophylax ridibundus (Marsh frog).